The primary structure comprises 138 residues: Small ribosomal subunit protein uS11c (138 aa).

Residues 1–23 are disordered; sequence MAKPIPRIGSRKNGRIGSRKSGR. Positions 9-23 are enriched in basic residues; it reads GSRKNGRIGSRKSGR.

Belongs to the universal ribosomal protein uS11 family. In terms of assembly, part of the 30S ribosomal subunit.

The protein resides in the plastid. The protein localises to the chloroplast. The protein is Small ribosomal subunit protein uS11c of Buxus microphylla (Littleleaf boxwood).